The sequence spans 76 residues: Toxin Acra III-2 (76 aa).

The 65-residue stretch at 3–67 folds into the LCN-type CS-alpha/beta domain; that stretch reads VPGNYPLNTY…IWDAVKNHCT (65 aa). Intrachain disulfides connect Cys-18/Cys-41, Cys-27/Cys-46, and Cys-31/Cys-48.

Belongs to the long (3 C-C) scorpion toxin superfamily. Sodium channel inhibitor family. Beta subfamily. As to expression, expressed by the venom gland.

The protein resides in the secreted. Its function is as follows. Binds to sodium channels (Nav) and affects the channel activation process. In Androctonus crassicauda (Arabian fat-tailed scorpion), this protein is Toxin Acra III-2.